The sequence spans 355 residues: METLKDKTLQELEELQNDSEAIDQLALESPEVQDLQLEREMALATNRSLAERNLEFQGPLEISRSNLSDRYQELRKLVERCQEQKAKLEKFSSALQPGTLLDLLQVEGMKIEEESEAMAEKFLEGEVPLETFLENFSSMRMLSHLRRVRVEKLQEVVRKPRASQELAGDAPPPRPPPPVRPVPQGTPPVVEEQPQPPLAMPPYPLPYSPSPSLPVGPTAHGALPPAPFPVVSQPSFYSGPLGPTYPAAQLGPRGAAGYSWSPQRSMPPRPGYPGTPMGASGPGYPLRGGRAPSPGYPQQSPYPATGGKPPYPIQPQLPSFPGQPQPSVPLQPPYPPGPAPPYGFPPPPGPAWPGY.

The residue at position 29 (Ser-29) is a Phosphoserine. In terms of domain architecture, VPS37 C-terminal spans 78–167 (VERCQEQKAK…RKPRASQELA (90 aa)). Residues 159 to 355 (KPRASQELAG…PPPGPAWPGY (197 aa)) are disordered. 2 stretches are compositionally biased toward pro residues: residues 170-186 (APPP…PQGT) and 194-214 (PQPP…PSLP). The span at 291-304 (APSPGYPQQSPYPA) shows a compositional bias: low complexity. Over residues 321-355 (PGQPQPSVPLQPPYPPGPAPPYGFPPPPGPAWPGY) the composition is skewed to pro residues.

Belongs to the VPS37 family. Component of the ESCRT-I complex (endosomal sorting complex required for transport I) which consists of TSG101, VPS28, a VPS37 protein (VPS37A to -D) and MVB12A or MVB12B in a 1:1:1:1 stoichiometry. Interacts with TSG101, VPS28, MVB12A and MVB12B. Component of the ESCRT-I complex (endosomal sorting complex required for transport I) which consists of TSG101, VPS28, a VPS37 protein (VPS37A to -D) and UBAP1 in a 1:1:1:1 stoichiometry. Interacts with HGS and STAM2. Interacts with CEP55. Post-translationally, phosphorylated by TBK1.

Its subcellular location is the late endosome membrane. In terms of biological role, component of the ESCRT-I complex, a regulator of vesicular trafficking process. Required for the sorting of endocytic ubiquitinated cargos into multivesicular bodies. May be involved in cell growth and differentiation. The protein is Vacuolar protein sorting-associated protein 37C (VPS37C) of Homo sapiens (Human).